The primary structure comprises 435 residues: Serine carboxypeptidase-like 16 (435 aa).

Positions 1 to 23 (MGSWIPKLLLLQLVLLLTKHADS) are cleaved as a signal peptide. 3 cysteine pairs are disulfide-bonded: Cys82-Cys325, Cys246-Cys260, and Cys284-Cys291. N-linked (GlcNAc...) asparagine glycosylation is present at Asn103. Ser178 is an active-site residue. An N-linked (GlcNAc...) asparagine glycan is attached at Asn305. Asp360 is an active-site residue. N-linked (GlcNAc...) asparagine glycosylation occurs at Asn376. The active site involves His413.

Belongs to the peptidase S10 family. Expressed in seedlings, roots and leaves.

It is found in the secreted. Its function is as follows. Probable carboxypeptidase. The polypeptide is Serine carboxypeptidase-like 16 (SCPL16) (Arabidopsis thaliana (Mouse-ear cress)).